The chain runs to 332 residues: 2,3-diketo-L-gulonate reductase (332 aa).

The active-site Proton donor is the histidine 44. Residues isoleucine 168–serine 174, tryptophan 224–lysine 225, and glycine 304–glutamate 306 each bind NAD(+).

This sequence belongs to the LDH2/MDH2 oxidoreductase family. DlgD subfamily. Homodimer.

It is found in the cytoplasm. It carries out the reaction 3-dehydro-L-gulonate + NAD(+) = 2,3-dioxo-L-gulonate + NADH + H(+). The enzyme catalyses 3-dehydro-L-gulonate + NADP(+) = 2,3-dioxo-L-gulonate + NADPH + H(+). Catalyzes the reduction of 2,3-diketo-L-gulonate in the presence of NADH, to form 3-keto-L-gulonate. The sequence is that of 2,3-diketo-L-gulonate reductase from Escherichia coli O1:K1 / APEC.